Consider the following 353-residue polypeptide: MTAILERRESENLWGRFCNWITSTENRLYIGWFGVLMIPTLLTATSVFIIAFIAAPPVDIDGIREPVSGSLLYGNNIISGAIIPTSAAIGLHFYPIWEAASVDEWLYNGGPYELIVLHFLLGVACYMGREWELSFRLGMRPWIAVAYSAPVAAATAVFLIYPIGQGSFSDGMPLGISGTFNFMIVFQAEHNILMHPFHMLGVAGVFGGSLFSAMHGSLVTSSLIRETTENESANEGYRFGQEEETYNIVAAHGYFGRLIFQYASFNNSRSLHFFLAAWPVVGIWFTALGISTMAFNLNGFNFNQSVVDSQGRVINTWADIINRANLGMEVMHERNAHNFPLDLAAVEAPSING.

T2 carries the N-acetylthreonine modification. Position 2 is a phosphothreonine (T2). The next 3 membrane-spanning stretches (helical) occupy residues 29 to 46 (YIGW…TATS), 118 to 133 (HFLL…EWEL), and 142 to 156 (WIAV…AATA). H118 contacts chlorophyll a. Pheophytin a is bound at residue Y126. [CaMn4O5] cluster-binding residues include D170 and E189. The chain crosses the membrane as a helical span at residues 197–218 (FHMLGVAGVFGGSLFSAMHGSL). H198 is a binding site for chlorophyll a. A quinone contacts are provided by residues H215 and 264-265 (SF). Position 215 (H215) interacts with Fe cation. Fe cation is bound at residue H272. Residues 274 to 288 (FLAAWPVVGIWFTAL) traverse the membrane as a helical segment. [CaMn4O5] cluster contacts are provided by H332, E333, D342, and A344. Positions 345-353 (AVEAPSING) are excised as a propeptide.

It belongs to the reaction center PufL/M/PsbA/D family. As to quaternary structure, PSII is composed of 1 copy each of membrane proteins PsbA, PsbB, PsbC, PsbD, PsbE, PsbF, PsbH, PsbI, PsbJ, PsbK, PsbL, PsbM, PsbT, PsbX, PsbY, PsbZ, Psb30/Ycf12, at least 3 peripheral proteins of the oxygen-evolving complex and a large number of cofactors. It forms dimeric complexes. The D1/D2 heterodimer binds P680, chlorophylls that are the primary electron donor of PSII, and subsequent electron acceptors. It shares a non-heme iron and each subunit binds pheophytin, quinone, additional chlorophylls, carotenoids and lipids. D1 provides most of the ligands for the Mn4-Ca-O5 cluster of the oxygen-evolving complex (OEC). There is also a Cl(-1) ion associated with D1 and D2, which is required for oxygen evolution. The PSII complex binds additional chlorophylls, carotenoids and specific lipids. is required as a cofactor. Tyr-161 forms a radical intermediate that is referred to as redox-active TyrZ, YZ or Y-Z. In terms of processing, C-terminally processed by CTPA; processing is essential to allow assembly of the oxygen-evolving complex and thus photosynthetic growth.

It is found in the plastid. The protein resides in the chloroplast thylakoid membrane. The enzyme catalyses 2 a plastoquinone + 4 hnu + 2 H2O = 2 a plastoquinol + O2. Its function is as follows. Photosystem II (PSII) is a light-driven water:plastoquinone oxidoreductase that uses light energy to abstract electrons from H(2)O, generating O(2) and a proton gradient subsequently used for ATP formation. It consists of a core antenna complex that captures photons, and an electron transfer chain that converts photonic excitation into a charge separation. The D1/D2 (PsbA/PsbD) reaction center heterodimer binds P680, the primary electron donor of PSII as well as several subsequent electron acceptors. The chain is Photosystem II protein D1 from Lotus japonicus (Lotus corniculatus var. japonicus).